The primary structure comprises 569 residues: Sulfite reductase [NADPH] hemoprotein beta-component (569 aa).

[4Fe-4S] cluster-binding residues include cysteine 433, cysteine 439, cysteine 478, and cysteine 482. Cysteine 482 provides a ligand contact to siroheme.

This sequence belongs to the nitrite and sulfite reductase 4Fe-4S domain family. As to quaternary structure, alpha(8)-beta(8). The alpha component is a flavoprotein, the beta component is a hemoprotein. The cofactor is siroheme. [4Fe-4S] cluster is required as a cofactor.

It carries out the reaction hydrogen sulfide + 3 NADP(+) + 3 H2O = sulfite + 3 NADPH + 4 H(+). The protein operates within sulfur metabolism; hydrogen sulfide biosynthesis; hydrogen sulfide from sulfite (NADPH route): step 1/1. Functionally, component of the sulfite reductase complex that catalyzes the 6-electron reduction of sulfite to sulfide. This is one of several activities required for the biosynthesis of L-cysteine from sulfate. This Buchnera aphidicola subsp. Acyrthosiphon pisum (strain Tuc7) protein is Sulfite reductase [NADPH] hemoprotein beta-component.